Reading from the N-terminus, the 220-residue chain is Pyridoxine/pyridoxamine 5'-phosphate oxidase (220 aa).

Residues 8 to 11 (RKSY) and Lys66 contribute to the substrate site. Residues 61–66 (RVVLIK), 76–77 (FT), Arg82, and Lys83 each bind FMN. 3 residues coordinate substrate: Tyr123, Arg127, and Ser131. Residues 140–141 (QS) and Trp184 contribute to the FMN site. 190–192 (RLH) lines the substrate pocket. Arg194 contacts FMN.

It belongs to the pyridoxamine 5'-phosphate oxidase family. Homodimer. FMN serves as cofactor.

It catalyses the reaction pyridoxamine 5'-phosphate + O2 + H2O = pyridoxal 5'-phosphate + H2O2 + NH4(+). The catalysed reaction is pyridoxine 5'-phosphate + O2 = pyridoxal 5'-phosphate + H2O2. The protein operates within cofactor metabolism; pyridoxal 5'-phosphate salvage; pyridoxal 5'-phosphate from pyridoxamine 5'-phosphate: step 1/1. Its pathway is cofactor metabolism; pyridoxal 5'-phosphate salvage; pyridoxal 5'-phosphate from pyridoxine 5'-phosphate: step 1/1. Catalyzes the oxidation of either pyridoxine 5'-phosphate (PNP) or pyridoxamine 5'-phosphate (PMP) into pyridoxal 5'-phosphate (PLP). The chain is Pyridoxine/pyridoxamine 5'-phosphate oxidase from Albidiferax ferrireducens (strain ATCC BAA-621 / DSM 15236 / T118) (Rhodoferax ferrireducens).